The primary structure comprises 359 residues: UDP-N-acetylglucosamine--N-acetylmuramyl-(pentapeptide) pyrophosphoryl-undecaprenol N-acetylglucosamine transferase (359 aa).

UDP-N-acetyl-alpha-D-glucosamine-binding positions include 15-17, Asn-127, Arg-166, Ser-191, Ile-245, 264-269, and Gln-290; these read TGG and ALTVSE.

Belongs to the glycosyltransferase 28 family. MurG subfamily.

The protein resides in the cell inner membrane. The enzyme catalyses di-trans,octa-cis-undecaprenyl diphospho-N-acetyl-alpha-D-muramoyl-L-alanyl-D-glutamyl-meso-2,6-diaminopimeloyl-D-alanyl-D-alanine + UDP-N-acetyl-alpha-D-glucosamine = di-trans,octa-cis-undecaprenyl diphospho-[N-acetyl-alpha-D-glucosaminyl-(1-&gt;4)]-N-acetyl-alpha-D-muramoyl-L-alanyl-D-glutamyl-meso-2,6-diaminopimeloyl-D-alanyl-D-alanine + UDP + H(+). It participates in cell wall biogenesis; peptidoglycan biosynthesis. In terms of biological role, cell wall formation. Catalyzes the transfer of a GlcNAc subunit on undecaprenyl-pyrophosphoryl-MurNAc-pentapeptide (lipid intermediate I) to form undecaprenyl-pyrophosphoryl-MurNAc-(pentapeptide)GlcNAc (lipid intermediate II). This chain is UDP-N-acetylglucosamine--N-acetylmuramyl-(pentapeptide) pyrophosphoryl-undecaprenol N-acetylglucosamine transferase, found in Pseudomonas putida (strain W619).